Consider the following 113-residue polypeptide: UPF0122 protein M6_Spy0905 (113 aa).

It belongs to the UPF0122 family.

Its function is as follows. Might take part in the signal recognition particle (SRP) pathway. This is inferred from the conservation of its genetic proximity to ftsY/ffh. May be a regulatory protein. This Streptococcus pyogenes serotype M6 (strain ATCC BAA-946 / MGAS10394) protein is UPF0122 protein M6_Spy0905.